The following is a 936-amino-acid chain: VPS35 endosomal protein-sorting factor-like (936 aa).

Disordered regions lie at residues 43–69 and 87–113; these read SKTK…VDPL and DPAA…VGPD. Residues 51 to 69 show a composition bias toward low complexity; it reads KGSTSSTSSSSSSSVVDPL. The residue at position 265 (Ser265) is a Phosphoserine. A helical membrane pass occupies residues 672 to 692; the sequence is AFVRACVAYCFITIPSLVGIF.

Belongs to the VPS35L family. As to quaternary structure, component of the heterotrimeric retriever complex formed by VPS26C, VPS29 and VPS35L. Interacts with VPS29. Interacts with COMMD1, CCDC93 and CCDC22; associates with the CCC (COMMD/CCDC22/CCDC93) complex which contains at least COMMD1 (and possibly other COMM domain-containing proteins), CCDC22 and CCDC93. Interacts with WASHC1, WASHC2A and WASHC2C. Interacts with SNX17 and SNX31.

It is found in the membrane. The protein resides in the endosome. Functionally, acts as a component of the retriever complex. The retriever complex is a heterotrimeric complex related to retromer cargo-selective complex (CSC) and essential for retromer-independent retrieval and recycling of numerous cargos such as integrin alpha-5/beta-1 (ITGA5:ITGB1). The recruitment of the retriever complex to the endosomal membrane involves CCC and WASH complexes. In the endosomes, drives the retrieval and recycling of NxxY-motif-containing cargo proteins by coupling to SNX17, a cargo essential for the homeostatic maintenance of numerous cell surface proteins associated with processes that include cell migration, cell adhesion, nutrient supply and cell signaling. Involved in copper-dependent ATP7A trafficking between the trans-Golgi network and vesicles in the cell periphery; the function is proposed to depend on its association with the CCC complex and cooperation with the WASH complex on early endosomes. Seems not to be required for CCC complex stability. The protein is VPS35 endosomal protein-sorting factor-like of Rattus norvegicus (Rat).